A 314-amino-acid polypeptide reads, in one-letter code: NF-kappa-B inhibitor alpha (314 aa).

The disordered stretch occupies residues 1 to 39; the sequence is MFQPAGHGQDWAMEGPRDGLKKERLVDDRHDSGLDSMKD. A compositionally biased stretch (basic and acidic residues) spans 15-39; that stretch reads GPRDGLKKERLVDDRHDSGLDSMKD. Lys21 is covalently cross-linked (Glycyl lysine isopeptide (Lys-Gly) (interchain with G-Cter in SUMO); alternate). Lys21 participates in a covalent cross-link: Glycyl lysine isopeptide (Lys-Gly) (interchain with G-Cter in ubiquitin); alternate. Lys22 participates in a covalent cross-link: Glycyl lysine isopeptide (Lys-Gly) (interchain with G-Cter in ubiquitin). The Destruction motif motif lies at 30–36; that stretch reads HDSGLDS. Ser32 carries the phosphoserine; by IKKA and IKKB modification. Ser36 is subject to Phosphoserine; by IKKA, IKKB, IKKE and TBK1. At Tyr42 the chain carries Phosphotyrosine; by Tyr-kinases. Positions 45-54 match the Nuclear export signal motif; it reads MVKELREIRL. The Nuclear import signal motif lies at 110–120; it reads LQQTPLHLAVI. ANK repeat units follow at residues 110-139, 143-172, 182-211, and 216-245; these read LQQT…DPEL, RGNT…PQHL, NGHT…DVNA, and NGRT…DVNR. (3S)-3-hydroxyasparagine; by HIF1AN occurs at positions 210 and 244. Phosphoserine; by CK2 is present on residues Ser283 and Ser288. The residue at position 291 (Thr291) is a Phosphothreonine; by CK2. The residue at position 293 (Ser293) is a Phosphoserine; by CK2. Thr296 bears the Phosphothreonine mark.

It belongs to the NF-kappa-B inhibitor family. In terms of assembly, interacts with RELA; the interaction requires the nuclear import signal. Part of a 70-90 kDa complex at least consisting of CHUK, IKBKB, NFKBIA, RELA, ELP1 and MAP3K14. Interacts with NKIRAS1 and NKIRAS2. Interacts with RWDD3; the interaction enhances sumoylation. Interacts with PRMT2. Interacts with PRKACA in platelets; this interaction is disrupted by thrombin and collagen. Interacts with MEFV. Interacts with DDRGK1; positively regulates NFKBIA phosphorylation and degradation. Interacts with HNRNPA2B1; the interaction may be mediated by the RRM2 domain of HNRNPA2B1, and HNRNPA2B1 may interact simultaneously with FAM76B and either NFKBIA or NFKBIE to form a complex. Phosphorylated at Ser-32 and Ser-36 by IKKA/CHUK and IKKB/IKBKB; disables inhibition of NF-kappa-B DNA-binding activity. Phosphorylation at positions 32 and 36 is prerequisite to recognition by the SCF(FBXW11) and SCF(BTRC) complexes, leading to polyubiquitination and subsequent degradation. In terms of processing, polyubiquitinated at Lys-21 and/or Lys-22 following phosphorylation at Ser-32 and Ser-36. Monoubiquitinated at Lys-21 and/or Lys-22 by UBE2D3. Ubiquitin chain elongation is then performed by CDC34 in cooperation with the SCF(FBXW11) E3 ligase complex, building ubiquitin chains from the UBE2D3-primed NFKBIA-linked ubiquitin. The resulting polyubiquitination leads to protein degradation. Also ubiquitinated by the SCF(BTRC) complex following stimulus-dependent phosphorylation at Ser-32 and Ser-36. Deubiquitinated by USP38, leading to NF-kappa-B inhibition. Post-translationally, sumoylated; sumoylation requires the presence of the nuclear import signal. Sumoylation blocks ubiquitination and proteasome-mediated degradation of the protein thereby increasing the protein stability. Hydroxylated by HIF1AN.

Its subcellular location is the cytoplasm. It localises to the nucleus. Functionally, inhibits the activity of dimeric NF-kappa-B/REL complexes by trapping REL (RELA/p65 and NFKB1/p50) dimers in the cytoplasm by masking their nuclear localization signals. On cellular stimulation by immune and pro-inflammatory responses, becomes phosphorylated promoting ubiquitination and degradation, enabling the dimeric RELA to translocate to the nucleus and activate transcription. In Rattus norvegicus (Rat), this protein is NF-kappa-B inhibitor alpha (Nfkbia).